The chain runs to 498 residues: Type VI secretion system sheath protein TssC1 (498 aa).

Forms a heterodimer with TssB1. Heterodimers assemble to form the sheath of the T6SS machinery. Interacts with TssA1.

Functionally, core component of the H1 type VI (H1-T6SS) secretion system that plays a role in the release of toxins targeting both eukaryotic and prokaryotic species. Forms the sheath of the structure by assembling into tubules together with TssB1 resulting in the stacking of cogwheel-like structures showing predominantly a 12-fold symmetry. The sheath contracts to provide the energy needed for effector delivery. This chain is Type VI secretion system sheath protein TssC1, found in Pseudomonas aeruginosa (strain ATCC 15692 / DSM 22644 / CIP 104116 / JCM 14847 / LMG 12228 / 1C / PRS 101 / PAO1).